The primary structure comprises 494 residues: V-type proton ATPase subunit B (494 aa).

The protein belongs to the ATPase alpha/beta chains family. In terms of assembly, V-ATPase is a heteromultimeric enzyme composed of a peripheral catalytic V1 complex (main components: subunits A, B, C, D, E, and F) attached to an integral membrane V0 proton pore complex (main component: the proteolipid protein).

Functionally, non-catalytic subunit of the peripheral V1 complex of vacuolar ATPase. V-ATPase is responsible for acidifying a variety of intracellular compartments in eukaryotic cells. The polypeptide is V-type proton ATPase subunit B (VAPB) (Plasmodium falciparum).